A 110-amino-acid polypeptide reads, in one-letter code: MKKKLSVLFTVFSFFVIGFAQIAFAADLDNGEKVFSANCAACHAGGNNAIMPDKTLKKDVLEANSMNTIDAITYQVQNGKNAMPAFGGRLVDEDIEDAANYVLSQSEKGW.

An N-terminal signal peptide occupies residues 1-25 (MKKKLSVLFTVFSFFVIGFAQIAFA). Heme c-binding residues include cysteine 39, cysteine 42, histidine 43, and methionine 83.

This sequence belongs to the cytochrome c family. PetJ subfamily. In terms of assembly, monomer. Binds 1 heme c group covalently per subunit.

It localises to the plastid. It is found in the chloroplast thylakoid lumen. Its function is as follows. Functions as an electron carrier between membrane-bound cytochrome b6-f and photosystem I in oxygenic photosynthesis. The polypeptide is Cytochrome c6 (petJ) (Pyropia yezoensis (Susabi-nori)).